Here is a 273-residue protein sequence, read N- to C-terminus: Transmembrane protein 202 (273 aa).

Transmembrane regions (helical) follow at residues 53-75 (HIYIRTLCGSLCSFSLLMLIAMS), 121-141 (FFLISVFTILTGLGWLFSSWI), 155-175 (VSMLSFISATCLLLCLNLFVA), and 189-209 (LLWTYYLNWCSDIFYMFAGII). The disordered stretch occupies residues 242-273 (TTVSPAKDEGPRSEMESLSVREKNLPKSGLWW). Basic and acidic residues predominate over residues 247–266 (AKDEGPRSEMESLSVREKNL).

Its subcellular location is the membrane. This chain is Transmembrane protein 202 (TMEM202), found in Homo sapiens (Human).